The chain runs to 470 residues: MNPNQKIITIGSICMTIGIISLILQIGNIISIWVSHSIQTGSQNHTGICNQRIITYENSTWVNQTYVNINNTNVVAGKDTTSVTLAGNSSLCPIRGWAIYSKDNSIRIGSKGDVFVIREPFISCSHLECRTFFLTQGALLNDKHSNGTVKDRSPYRALMSCPIGEAPSPYNSRFESVAWSASACHDGMGWLTIGISGPDDGAVAVLKYNGIITETIKSWRKRILRTQESECVCVNGSCFTIMTDGPSNGPASYRIFKIEKGKITKSIELDAPNSHYEECSCYPDTGTVMCVCRDNWHGSNRPWVSFNQNLDYQIGYICSGVFGDNPRPKDGKGSCDPVTVDGADGVKGFSYRYGNGVWIGRTKSNSSRKGFEMIWDPNGWTDTDSNFLVKQDVVAMTDWSGYSGSFVQHPELTGLDCMRPCFWVELIRGRPREKTTIWTSGSSISFCGVNSDTANWSWPDGAELPFTIDK.

The Intravirion portion of the chain corresponds to 1–6; the sequence is MNPNQK. Residues 7–27 form a helical membrane-spanning segment; that stretch reads IITIGSICMTIGIISLILQIG. Residues 11–33 form an involved in apical transport and lipid raft association region; that stretch reads GSICMTIGIISLILQIGNIISIW. Residues 28–470 are Virion surface-facing; the sequence is NIISIWVSHS…GAELPFTIDK (443 aa). The segment at 36-90 is hypervariable stalk region; it reads HSIQTGSQNHTGICNQRIITYENSTWVNQTYVNINNTNVVAGKDTTSVTLAGNSS. Residues asparagine 44, asparagine 58, asparagine 63, asparagine 70, and asparagine 88 are each glycosylated (N-linked (GlcNAc...) asparagine; by host). Positions 91 to 470 are head of neuraminidase; it reads LCPIRGWAIY…GAELPFTIDK (380 aa). 8 cysteine pairs are disulfide-bonded: cysteine 92–cysteine 417, cysteine 124–cysteine 129, cysteine 184–cysteine 231, cysteine 233–cysteine 238, cysteine 279–cysteine 292, cysteine 281–cysteine 290, cysteine 318–cysteine 335, and cysteine 421–cysteine 447. Arginine 118 contacts substrate. A glycan (N-linked (GlcNAc...) asparagine; by host) is linked at asparagine 146. Aspartate 151 serves as the catalytic Proton donor/acceptor. Arginine 152 is a binding site for substrate. Residue asparagine 235 is glycosylated (N-linked (GlcNAc...) asparagine; by host). 277–278 is a substrate binding site; sequence EE. Arginine 293 contributes to the substrate binding site. The Ca(2+) site is built by aspartate 294, glycine 298, and aspartate 324. Asparagine 365 carries N-linked (GlcNAc...) asparagine; by host glycosylation. Arginine 368 is a substrate binding site. Catalysis depends on tyrosine 402, which acts as the Nucleophile. The N-linked (GlcNAc...) asparagine; by host glycan is linked to asparagine 455.

The protein belongs to the glycosyl hydrolase 34 family. In terms of assembly, homotetramer. Ca(2+) is required as a cofactor. In terms of processing, N-glycosylated.

Its subcellular location is the virion membrane. It localises to the host apical cell membrane. It carries out the reaction Hydrolysis of alpha-(2-&gt;3)-, alpha-(2-&gt;6)-, alpha-(2-&gt;8)- glycosidic linkages of terminal sialic acid residues in oligosaccharides, glycoproteins, glycolipids, colominic acid and synthetic substrates.. Its activity is regulated as follows. Inhibited by the neuraminidase inhibitors zanamivir (Relenza) and oseltamivir (Tamiflu). These drugs interfere with the release of progeny virus from infected cells and are effective against all influenza strains. Resistance to neuraminidase inhibitors is quite rare. In terms of biological role, catalyzes the removal of terminal sialic acid residues from viral and cellular glycoconjugates. Cleaves off the terminal sialic acids on the glycosylated HA during virus budding to facilitate virus release. Additionally helps virus spread through the circulation by further removing sialic acids from the cell surface. These cleavages prevent self-aggregation and ensure the efficient spread of the progeny virus from cell to cell. Otherwise, infection would be limited to one round of replication. Described as a receptor-destroying enzyme because it cleaves a terminal sialic acid from the cellular receptors. May facilitate viral invasion of the upper airways by cleaving the sialic acid moieties on the mucin of the airway epithelial cells. Likely to plays a role in the budding process through its association with lipid rafts during intracellular transport. May additionally display a raft-association independent effect on budding. Plays a role in the determination of host range restriction on replication and virulence. Sialidase activity in late endosome/lysosome traffic seems to enhance virus replication. In Influenza A virus (strain A/Chile/1/1983 H1N1), this protein is Neuraminidase.